The primary structure comprises 339 residues: Ketol-acid reductoisomerase (NADP(+)) (339 aa).

Residues 1–182 (MRVYYDRDAD…GGGRSGIIET (182 aa)) form the KARI N-terminal Rossmann domain. NADP(+)-binding positions include 24 to 27 (YGSQ), R48, S51, S53, and 83 to 86 (DELQ). Residue H108 is part of the active site. G134 serves as a coordination point for NADP(+). The 146-residue stretch at 183–328 (TFREECETDL…GRLRAMMPWI (146 aa)) folds into the KARI C-terminal knotted domain. Mg(2+) is bound by residues D191, E195, E227, and E231. Position 252 (S252) interacts with substrate.

It belongs to the ketol-acid reductoisomerase family. Mg(2+) is required as a cofactor.

It catalyses the reaction (2R)-2,3-dihydroxy-3-methylbutanoate + NADP(+) = (2S)-2-acetolactate + NADPH + H(+). The catalysed reaction is (2R,3R)-2,3-dihydroxy-3-methylpentanoate + NADP(+) = (S)-2-ethyl-2-hydroxy-3-oxobutanoate + NADPH + H(+). Its pathway is amino-acid biosynthesis; L-isoleucine biosynthesis; L-isoleucine from 2-oxobutanoate: step 2/4. It functions in the pathway amino-acid biosynthesis; L-valine biosynthesis; L-valine from pyruvate: step 2/4. In terms of biological role, involved in the biosynthesis of branched-chain amino acids (BCAA). Catalyzes an alkyl-migration followed by a ketol-acid reduction of (S)-2-acetolactate (S2AL) to yield (R)-2,3-dihydroxy-isovalerate. In the isomerase reaction, S2AL is rearranged via a Mg-dependent methyl migration to produce 3-hydroxy-3-methyl-2-ketobutyrate (HMKB). In the reductase reaction, this 2-ketoacid undergoes a metal-dependent reduction by NADPH to yield (R)-2,3-dihydroxy-isovalerate. In Rhodospirillum rubrum (strain ATCC 11170 / ATH 1.1.1 / DSM 467 / LMG 4362 / NCIMB 8255 / S1), this protein is Ketol-acid reductoisomerase (NADP(+)).